The chain runs to 143 residues: Transcriptional regulator MraZ (143 aa).

SpoVT-AbrB domains follow at residues Glu-5–Glu-47 and Ala-76–Thr-119.

Belongs to the MraZ family. In terms of assembly, forms oligomers.

It localises to the cytoplasm. The protein resides in the nucleoid. This is Transcriptional regulator MraZ from Staphylococcus haemolyticus (strain JCSC1435).